The chain runs to 370 residues: Protein SHI RELATED SEQUENCE 1 (370 aa).

A disordered region spans residues 1–37; it reads MAGFFSLDGGGGGGGGGGNNQEDHRSNTNPPPPVSEA. Residues 8-19 are compositionally biased toward gly residues; it reads DGGGGGGGGGGN. Zn(2+) is bound by residues Cys-144, Cys-147, Cys-155, Cys-160, Cys-164, and Cys-171. The segment at residues 144–171 is a DNA-binding region (zn(2)-C6 fungal-type; degenerate); that stretch reads CQDCGNQAKKDCSHMRCRTCCKSRGFEC. The Required for homo- and heterodimerization signature appears at 271 to 274; it reads IGGH.

The protein belongs to the SHI protein family. Forms homodimers and heterodimers with LRP1. In terms of tissue distribution, expressed in flowers, seeds and seedlings.

Its subcellular location is the nucleus. Transcription activator that binds DNA on 5'-ACTCTAC-3' and promotes auxin homeostasis-regulating gene expression (e.g. YUC genes), as well as genes affecting stamen development, cell expansion and timing of flowering. Synergistically with other SHI-related proteins, regulates gynoecium, stamen and leaf development in a dose-dependent manner, controlling apical-basal patterning. Promotes style and stigma formation, and influences vascular development during gynoecium development. May also have a role in the formation and/or maintenance of the shoot apical meristem (SAM). The polypeptide is Protein SHI RELATED SEQUENCE 1 (SRS1) (Arabidopsis thaliana (Mouse-ear cress)).